A 145-amino-acid chain; its full sequence is 3-dehydroquinate dehydratase 1 (145 aa).

The Proton acceptor role is filled by Y24. Positions 75, 81, and 88 each coordinate substrate. The active-site Proton donor is H101. Residues 102 to 103 (IS) and R112 contribute to the substrate site.

It belongs to the type-II 3-dehydroquinase family. In terms of assembly, homododecamer.

The enzyme catalyses 3-dehydroquinate = 3-dehydroshikimate + H2O. The protein operates within metabolic intermediate biosynthesis; chorismate biosynthesis; chorismate from D-erythrose 4-phosphate and phosphoenolpyruvate: step 3/7. In terms of biological role, catalyzes a trans-dehydration via an enolate intermediate. The sequence is that of 3-dehydroquinate dehydratase 1 (aroQ1) from Agrobacterium fabrum (strain C58 / ATCC 33970) (Agrobacterium tumefaciens (strain C58)).